A 637-amino-acid chain; its full sequence is Threonine--tRNA ligase (637 aa).

In terms of domain architecture, TGS spans 1-65 (MIAIQLPDGS…EADEALSIIT (65 aa)). Residues 246–537 (DHRKLGRELD…LIEEHAGALP (292 aa)) form a catalytic region. Positions 337, 388, and 514 each coordinate Zn(2+).

This sequence belongs to the class-II aminoacyl-tRNA synthetase family. In terms of assembly, homodimer. Requires Zn(2+) as cofactor.

The protein localises to the cytoplasm. It carries out the reaction tRNA(Thr) + L-threonine + ATP = L-threonyl-tRNA(Thr) + AMP + diphosphate + H(+). Its function is as follows. Catalyzes the attachment of threonine to tRNA(Thr) in a two-step reaction: L-threonine is first activated by ATP to form Thr-AMP and then transferred to the acceptor end of tRNA(Thr). Also edits incorrectly charged L-seryl-tRNA(Thr). This chain is Threonine--tRNA ligase, found in Leptothrix cholodnii (strain ATCC 51168 / LMG 8142 / SP-6) (Leptothrix discophora (strain SP-6)).